Reading from the N-terminus, the 304-residue chain is Ribonuclease Z (304 aa).

Residues histidine 63, histidine 65, aspartate 67, histidine 68, histidine 143, aspartate 213, and histidine 271 each contribute to the Zn(2+) site. Catalysis depends on aspartate 67, which acts as the Proton acceptor.

The protein belongs to the RNase Z family. In terms of assembly, homodimer. The cofactor is Zn(2+).

The catalysed reaction is Endonucleolytic cleavage of RNA, removing extra 3' nucleotides from tRNA precursor, generating 3' termini of tRNAs. A 3'-hydroxy group is left at the tRNA terminus and a 5'-phosphoryl group is left at the trailer molecule.. Its function is as follows. Zinc phosphodiesterase, which displays some tRNA 3'-processing endonuclease activity. Probably involved in tRNA maturation, by removing a 3'-trailer from precursor tRNA. In Parabacteroides distasonis (strain ATCC 8503 / DSM 20701 / CIP 104284 / JCM 5825 / NCTC 11152), this protein is Ribonuclease Z.